Here is a 217-residue protein sequence, read N- to C-terminus: Adenylate kinase (217 aa).

Position 10-15 (10-15 (GSGKGT)) interacts with ATP. The tract at residues 30 to 59 (STGDLLRAAVAAGSELGKQAKAAMDAGELV) is NMP. AMP-binding positions include threonine 31, arginine 36, 57–59 (ELV), 85–88 (GFPR), and glutamine 92. The interval 126 to 164 (GRRTCQACGAIYNIYFSPPEVDHRCDKCNSDQLVQRSDD) is LID. Arginine 127 contacts ATP. 2 residues coordinate Zn(2+): cysteine 130 and cysteine 133. An ATP-binding site is contributed by 136–137 (IY). The Zn(2+) site is built by cysteine 150 and cysteine 153. 2 residues coordinate AMP: arginine 161 and arginine 172. Aspartate 200 serves as a coordination point for ATP.

The protein belongs to the adenylate kinase family. In terms of assembly, monomer.

The protein resides in the cytoplasm. The enzyme catalyses AMP + ATP = 2 ADP. Its pathway is purine metabolism; AMP biosynthesis via salvage pathway; AMP from ADP: step 1/1. In terms of biological role, catalyzes the reversible transfer of the terminal phosphate group between ATP and AMP. Plays an important role in cellular energy homeostasis and in adenine nucleotide metabolism. The protein is Adenylate kinase of Nitrosococcus oceani (strain ATCC 19707 / BCRC 17464 / JCM 30415 / NCIMB 11848 / C-107).